The primary structure comprises 605 residues: YTH domain-containing protein ECT4 (605 aa).

Disordered regions lie at residues Gly249 to His274 and Glu357 to Asp384. Residues Lys256–His274 are compositionally biased toward polar residues. The segment covering Lys368–Phe383 has biased composition (basic and acidic residues). The YTH domain occupies Ala414–Phe551. Residues Lys420–Tyr422, Asp426, Trp436–Ala437, Asn469, Trp493, Trp498, and Trp506 each bind RNA. Residues Lys580–Met605 are disordered.

In terms of tissue distribution, expressed in the shoot apex, at the sites of leaf formation, and in emerging leaves.

The protein resides in the cytoplasm. In terms of biological role, specifically recognizes and binds N6-methyladenosine (m6A)-containing RNAs, and regulates mRNA stability. M6A is a modification present at internal sites of mRNAs and some non-coding RNAs and plays a role in mRNA stability and processing. Required for the correct timing of leaf formation and normal leaf morphology. This is YTH domain-containing protein ECT4 from Arabidopsis thaliana (Mouse-ear cress).